A 292-amino-acid chain; its full sequence is Proteasome subunit beta (292 aa).

The propeptide at 1–62 (MSESLGSVPG…HRAADDIPHG (62 aa)) is removed in mature form; by autocatalysis. Threonine 63 functions as the Nucleophile in the catalytic mechanism.

It belongs to the peptidase T1B family. In terms of assembly, the 20S proteasome core is composed of 14 alpha and 14 beta subunits that assemble into four stacked heptameric rings, resulting in a barrel-shaped structure. The two inner rings, each composed of seven catalytic beta subunits, are sandwiched by two outer rings, each composed of seven alpha subunits. The catalytic chamber with the active sites is on the inside of the barrel. Has a gated structure, the ends of the cylinder being occluded by the N-termini of the alpha-subunits. Is capped by the proteasome-associated ATPase, ARC.

The protein resides in the cytoplasm. The catalysed reaction is Cleavage of peptide bonds with very broad specificity.. It functions in the pathway protein degradation; proteasomal Pup-dependent pathway. The formation of the proteasomal ATPase ARC-20S proteasome complex, likely via the docking of the C-termini of ARC into the intersubunit pockets in the alpha-rings, may trigger opening of the gate for substrate entry. Interconversion between the open-gate and close-gate conformations leads to a dynamic regulation of the 20S proteasome proteolysis activity. In terms of biological role, component of the proteasome core, a large protease complex with broad specificity involved in protein degradation. The chain is Proteasome subunit beta from Gordonia bronchialis (strain ATCC 25592 / DSM 43247 / BCRC 13721 / JCM 3198 / KCTC 3076 / NBRC 16047 / NCTC 10667) (Rhodococcus bronchialis).